Reading from the N-terminus, the 310-residue chain is ER-derived vesicles protein ERV29 (310 aa).

Topologically, residues methionine 1 to tyrosine 108 are cytoplasmic. Residues glycine 11 to asparagine 31 form a disordered region. Residues phenylalanine 109–leucine 129 form a helical membrane-spanning segment. Residues valine 130–tyrosine 137 are Lumenal-facing. Residues alanine 138–glycine 158 form a helical membrane-spanning segment. Residues serine 159–arginine 209 lie on the Cytoplasmic side of the membrane. The chain crosses the membrane as a helical span at residues isoleucine 210–leucine 230. At threonine 231–lysine 245 the chain is on the lumenal side. A helical transmembrane segment spans residues phenylalanine 246–tryptophan 266. Topologically, residues phenylalanine 267–tyrosine 310 are cytoplasmic. The short motif at lysine 307 to tyrosine 310 is the Di-lysine motif element.

The protein belongs to the SURF4 family.

The protein resides in the endoplasmic reticulum membrane. Constituent of COPII-coated endoplasmic reticulum-derived transport vesicles. Required for efficient transport of a subset of secretory proteins to the Golgi. The C-terminal di-lysine motif is required for exit from the endoplasmic reticulum. Required directly for packaging glycosylated pro-alpha-factor into COPII vesicles. Facilitates retrograde transport from the Golgi to the endoplasmic reticulum. In Saccharomyces cerevisiae (strain ATCC 204508 / S288c) (Baker's yeast), this protein is ER-derived vesicles protein ERV29 (ERV29).